The primary structure comprises 377 residues: Prostaglandin E synthase 2 (377 aa).

The Lumenal segment spans residues 1–57 (MDPAARVVRALWPGGCALAWRLGGRPQPLLPTQSRAGFAGAAGGPSPVAAARKGSPR). The chain crosses the membrane as a helical span at residues 58–74 (LLGAAALALGGALGLYH). The Cytoplasmic segment spans residues 75–377 (TARWHLRAQD…RAITEASPAH (303 aa)). Positions 90 to 193 (SAAQLSLSSR…EIITYYPAMK (104 aa)) constitute a Glutaredoxin domain. S95 carries the post-translational modification Phosphoserine. Glutathione is bound by residues V148 and 164–165 (DS). The 115-residue stretch at 263 to 377 (YIVREGKFGA…RAITEASPAH (115 aa)) folds into the GST C-terminal domain.

It belongs to the GST superfamily. In terms of assembly, homodimer. May interact with CEBPB. Interacts with EXOSC10. Post-translationally, synthesized as a Golgi membrane-associated protein, and the proteolytic removal of the N-terminal hydrophobic domain leads to the formation of a mature cytosolic enzyme. In terms of tissue distribution, widely expressed. Expressed in the heart, including apex, inter-ventricular septum, both atria and ventricles, but not in the aorta. Also expressed in fetal heart. Detected in various regions of the brain: cerebellum; occipital, frontal and parietal lobes. Also expressed in the lymph nodes, skeletal muscle, kidney and trachea, but not in the thymus or lung. Overexpressed in colorectal cancer.

The protein localises to the golgi apparatus membrane. The protein resides in the cytoplasm. It localises to the perinuclear region. It carries out the reaction prostaglandin H2 = prostaglandin E2. It catalyses the reaction prostaglandin H2 = (12S)-hydroxy-(5Z,8E,10E)-heptadecatrienoate + malonaldehyde. It participates in lipid metabolism; prostaglandin biosynthesis. Its activity is regulated as follows. Isomerase activity is increased by sulfhydril compounds. Dithiothreitol (DTT) is most effective, followed by dihydrolipoic acid, glutathione (GSH) and 2-mercaptoethanol. Isomerase that catalyzes the conversion of PGH2 into the more stable prostaglandin E2 (PGE2) (in vitro). The biological function and the GSH-dependent property of PTGES2 is still under debate. In vivo, PTGES2 could form a complex with GSH and heme and would not participate in PGE2 synthesis but would catalyze the degradation of prostaglandin E2 H2 (PGH2) to 12(S)-hydroxy-5(Z),8(E),10(E)-heptadecatrienoic acid (HHT) and malondialdehyde (MDA). This is Prostaglandin E synthase 2 (PTGES2) from Homo sapiens (Human).